The following is a 1250-amino-acid chain: MSKNSNVNNNRSQEPNNMFVQTTGGGKNAPKQIHVAHRRSQSELTNLMIEQFTLQKQLEQVQAQQQQLMAQQQQLAQQTGQYLSGNSGSNNHFTPQPPHPHYNSNGNSPGMSAGGSRSRTHSRNNSGYYHNSYDNNNNSNNPGSNSHRKTSSQSSIYGHSRRHSLGLNEAKKAAAEEQAKRISGGEAGVTVKIDSVQADSGSNSTTEQSDFKFPPPPNAHQGHRRATSNLSPPSFKFPPNSHGDNDDEFIATSSTHRRSKTRNNEYSPGINSNWRNQSQQPQQQLSPFRHRGSNSRDYNSFNTLEPPAIFQQGHKHRASNSSVHSFSSQGNNNGGGRKSLFAPYLPQANIPELIQEGRLVAGILRVNKKNRSDAWVSTDGALDADIYICGSKDRNRALEGDLVAVELLVVDDVWESKKEKEEKKRRKDASMQHDLIPLNSSDDYHNDASVTAATSNNFLSSPSSSDSLSKDDLSVRRKRSSTINNDSDSLSSPTKSGVRRRSSLKQRPTQKKNDDVEVEGQSLLLVEEEEINDKYKPLYAGHVVAVLDRIPGQLFSGTLGLLRPSQQANSDNNKPPQSPKIAWFKPTDKKVPLIAIPTELAPKDFVENADKYSEKLFVASIKRWPITSLHPFGILVSELGDIHDPDTEIDSILRDNNFLSNEYLDQKNPQKEKPSFQPLPLTAESLEYRRNFTDTNEYNIFAISELGWVSEFALHVRNNGNGTLELGCHVVDVTSHIEEGSSVDRRARKRSSAVFMPQKLVNLLPQSFNDELSLAPGKESATLSVVYTLDSSTLRIKSTWVGESTISPSNILSLEQLDEKLSTGSPTSYLSTVQEIARSFYARRINDPEATLLPTLSLLESLDDEKVKVDLNILDRTLGFVVINEIKRKVNSTVAEKIYTKLGDLALLRRQMQPIATKMASFRKKIQNFGYNFDTNTADELIKGVLKIKDDDVRVGIEILLFKTMPRARYFIAGKVDPDQYGHYALNLPIYTHFTAPMRRYADHVVHRQLKAVIHDTPYTEDMEALKITSEYCNFKKDCAYQAQEQAIHLLLCKTINDMGNTTGQLLTMATVLQVYESSFDVFIPEFGIEKRVHGDQLPLIKAEFDGTNRVLELHWQPGVDSATFIPADEKNPKSYRNSIKNKFRSTAAEIANIELDKEAESEPLISDPLSKELSDLHLTVPNLRLPSASDNKQNALEKFISTTETRIENDNYIQEIHELQKIPILLRAEVGMALPCLTVRALNPFMKRV.

Over residues 1 to 22 (MSKNSNVNNNRSQEPNNMFVQT) the composition is skewed to polar residues. The disordered stretch occupies residues 1-32 (MSKNSNVNNNRSQEPNNMFVQTTGGGKNAPKQ). The residue at position 2 (serine 2) is an N-acetylserine. A Phosphoserine modification is found at serine 40. The segment at 79–163 (TGQYLSGNSG…SSIYGHSRRH (85 aa)) is disordered. A compositionally biased stretch (polar residues) spans 84–94 (SGNSGSNNHFT). Residues 124-145 (NNSGYYHNSYDNNNNSNNPGSN) show a composition bias toward low complexity. Phosphoserine occurs at positions 164 and 183. Positions 197 to 208 (QADSGSNSTTEQ) are enriched in polar residues. Disordered stretches follow at residues 197-338 (QADS…GGRK), 418-443 (KEKEEKKRRKDASMQHDLIPLNSSDD), and 455-517 (SNNF…DDVE). Threonine 227 carries the phosphothreonine modification. Residues 264 to 276 (NEYSPGINSNWRN) are compositionally biased toward polar residues. Low complexity predominate over residues 277-287 (QSQQPQQQLSP). A phosphoserine mark is found at serine 286 and serine 322. A compositionally biased stretch (polar residues) spans 319–329 (SNSSVHSFSSQ). The span at 481–495 (STINNDSDSLSSPTK) shows a compositional bias: polar residues. 2 positions are modified to phosphoserine: serine 491 and serine 492. The segment covering 497–510 (GVRRRSSLKQRPTQ) has biased composition (basic residues). Positions 582–657 (AWFKPTDKKV…EIDSILRDNN (76 aa)) constitute a CSD2 domain. Tyrosine 688 carries the post-translational modification Phosphotyrosine. The RNB domain occupies 694–1015 (DTNEYNIFAI…VHRQLKAVIH (322 aa)). One can recognise a DIS3L2 C-terminal domain in the interval 1064-1148 (GQLLTMATVL…SIKNKFRSTA (85 aa)).

Belongs to the RNR ribonuclease family.

Its function is as follows. Can suppress the lethality due to deletion of SIT4, and partially the defects due to BCY1 disruption. Is implicated in the control of the cell cycle G1 phase. In Saccharomyces cerevisiae (strain ATCC 204508 / S288c) (Baker's yeast), this protein is Protein SSD1 (SSD1).